The primary structure comprises 181 residues: Protein Syd (181 aa).

This sequence belongs to the Syd family.

It localises to the cell inner membrane. Functionally, interacts with the SecY protein in vivo. May bind preferentially to an uncomplexed state of SecY, thus functioning either as a chelating agent for excess SecY in the cell or as a regulatory factor that negatively controls the translocase function. The chain is Protein Syd from Escherichia coli O81 (strain ED1a).